The following is a 409-amino-acid chain: Cdc42 effector protein 1 (409 aa).

Positions 1–29 are disordered; that stretch reads MPGPQGGTGAPTMSLGKLSPVGWVSSSHG. A phosphoserine mark is found at Ser19 and Ser27. Thr34 carries the phosphothreonine modification. The CRIB domain maps to 38–52; it reads ISPPLGDFRHTMHVG. A Phosphoserine modification is found at Ser39. An Omega-N-methylarginine modification is found at Arg53. Phosphoserine is present on residues Ser65, Ser77, Ser101, Ser113, Ser121, and Ser139. Basic and acidic residues predominate over residues 167–189; it reads PRVEKHSNRDRDRDPDHSQDREQ. The interval 167 to 203 is disordered; sequence PRVEKHSNRDRDRDPDHSQDREQSSFPSEPTPNPELR. Phosphoserine is present on residues Ser191, Ser205, Ser207, and Ser210. 3 tandem repeats follow at residues 235-241, 242-248, and 255-261. The segment at 235–284 is 3 X 7 AA tandem repeats of [PT]-[AT]-A-[ENT]-[PT]-[PTS]-[AG]; it reads PAAETPVPTANPPAPAANPAPTAKPPAHAITTLDAVTSLPASAVTSLPAP. Disordered stretches follow at residues 237–260 and 282–329; these read AETP…AKPP and PAPA…FDRH. The span at 243–258 shows a compositional bias: pro residues; the sequence is TANPPAPAANPAPTAK. A compositionally biased stretch (low complexity) spans 282-291; that stretch reads PAPAAASSPS. Phosphoserine occurs at positions 312, 332, 368, and 371.

The protein belongs to the BORG/CEP family. In terms of assembly, interacts with RHOQ and CDC42, in a GTP-dependent manner.

Its subcellular location is the endomembrane system. It is found in the cytoplasm. The protein resides in the cytoskeleton. Functionally, probably involved in the organization of the actin cytoskeleton. Induced membrane extensions in fibroblasts. The protein is Cdc42 effector protein 1 (Cdc42ep1) of Mus musculus (Mouse).